The following is a 443-amino-acid chain: Ribosomal protein uS12 methylthiotransferase RimO (443 aa).

The 111-residue stretch at 8 to 118 (PKVGFVSLGC…VVNAVHEVVP (111 aa)) folds into the MTTase N-terminal domain. Residues cysteine 17, cysteine 53, cysteine 82, cysteine 151, cysteine 155, and cysteine 158 each coordinate [4Fe-4S] cluster. A Radical SAM core domain is found at 137–375 (LTPRHYAYLK…MAHQQAISTA (239 aa)). In terms of domain architecture, TRAM spans 378 to 443 (QLRIGKEIEV…DEYDMWAEPI (66 aa)).

It belongs to the methylthiotransferase family. RimO subfamily. [4Fe-4S] cluster is required as a cofactor.

Its subcellular location is the cytoplasm. The enzyme catalyses L-aspartate(89)-[ribosomal protein uS12]-hydrogen + (sulfur carrier)-SH + AH2 + 2 S-adenosyl-L-methionine = 3-methylsulfanyl-L-aspartate(89)-[ribosomal protein uS12]-hydrogen + (sulfur carrier)-H + 5'-deoxyadenosine + L-methionine + A + S-adenosyl-L-homocysteine + 2 H(+). Its function is as follows. Catalyzes the methylthiolation of an aspartic acid residue of ribosomal protein uS12. This chain is Ribosomal protein uS12 methylthiotransferase RimO, found in Pseudomonas putida (strain GB-1).